The chain runs to 354 residues: 3-dehydroquinate synthase (354 aa).

Residues 66–71 (SGETSK), 100–104 (GATGD), 124–125 (TT), Lys-136, Lys-145, and 163–166 (FLET) contribute to the NAD(+) site. Zn(2+) contacts are provided by Glu-178, His-242, and His-256.

The protein belongs to the sugar phosphate cyclases superfamily. Dehydroquinate synthase family. The cofactor is NAD(+). It depends on Co(2+) as a cofactor. Zn(2+) is required as a cofactor.

It is found in the cytoplasm. It catalyses the reaction 7-phospho-2-dehydro-3-deoxy-D-arabino-heptonate = 3-dehydroquinate + phosphate. It participates in metabolic intermediate biosynthesis; chorismate biosynthesis; chorismate from D-erythrose 4-phosphate and phosphoenolpyruvate: step 2/7. Catalyzes the conversion of 3-deoxy-D-arabino-heptulosonate 7-phosphate (DAHP) to dehydroquinate (DHQ). The sequence is that of 3-dehydroquinate synthase from Staphylococcus epidermidis (strain ATCC 35984 / DSM 28319 / BCRC 17069 / CCUG 31568 / BM 3577 / RP62A).